Here is a 110-residue protein sequence, read N- to C-terminus: FMRFamide-like neuropeptides 11 (110 aa).

The N-terminal stretch at 1 to 22 (MTQFSALALLLIVFVAASFAQS) is a signal peptide. Residues 23 to 29 (YDDVSAE) constitute a propeptide that is removed on maturation. Phenylalanine 40 and phenylalanine 54 each carry phenylalanine amide. The interval 60–85 (LDEEDFAPESPLQGKRNGAPQPFVRF) is disordered. At glutamine 72 the chain carries Glutamine amide. Phenylalanine 85 is subject to Phenylalanine amide. Positions 88–110 (SGQLDHMHDLLSTLQKLKFANNK) are excised as a propeptide.

Belongs to the FARP (FMRFamide related peptide) family. In terms of tissue distribution, each flp gene is expressed in a distinct set of neurons. Flp-11 is expressed in the DD, VD and DVB motor neurons, the PVC and URX interneurons, and the AUA, BAG, DA, LUA, and SAB neurons. Also expressed in head muscle, socket or sheath cells and uterine cells. Expressed exclusively in PHC sensory neurons in males. Expressed in AVK and RIS interneurons.

The protein localises to the secreted. FMRFamides and FMRFamide-like peptides are neuropeptides. Induces sleep-like quiescence behavior following release from RIS interneuron. Helps to sustain locomotion stop after gamma-aminobutyric acid (GABA) induces fast slowing response. Inhibits the late-stage body bend swimming frequency in animals through several receptors including frpr-3, npr-4 and npr-22. Functionally, potent inhibitor of the activity of the dissected pharyngeal myogenic muscle system. Acts as a ligand for the npr-22 receptor in vitro. In terms of biological role, acts as a ligand for the npr-22 receptor in vitro. In Caenorhabditis elegans, this protein is FMRFamide-like neuropeptides 11.